We begin with the raw amino-acid sequence, 213 residues long: Oxidase ustYa (213 aa).

The tract at residues 1 to 26 is disordered; the sequence is MAERSSNGYKEVPVRQSEESTIAEEE. A helical transmembrane segment spans residues 48-68; sequence AVWFLIALLLLSNIGLLGGLI. Asparagine 98 carries an N-linked (GlcNAc...) asparagine glycan. Short sequence motifs (HXXHC) lie at residues 123 to 127 and 150 to 154; these read HQLHC and HLMHC.

The protein belongs to the ustYa family.

Its subcellular location is the membrane. It functions in the pathway mycotoxin biosynthesis. Functionally, oxidase; part of the gene cluster that mediates the biosynthesis of the secondary metabolite ustiloxin B, an antimitotic tetrapeptide. First, ustA is processed by the subtilisin-like endoprotease Kex2 that is outside the ustiloxin B gene cluster, at the C-terminal side of Arg-Lys, after transfer to Golgi apparatus through the endoplasmic reticulum (ER). Cleavage by KEX2 generates 16 peptides YAIG-I to YAIG-XVI. To process the precursor peptide further, at least two peptidases are necessary to cleave the N-terminal and C-terminal sides of the Tyr-Ala-Ile-Gly core peptide which serves as backbone for the synthesis of ustiloxin B, through cyclization and modification of the tyrosine with a non-protein coding amino acid, norvaline. One of the two peptidases must be the serine peptidase ustP; and the other pepdidase is probably ustH. Macrocyclization of the core peptide derived from ustA requires the tyrosinase ustQ, as well as the homologous oxidases ustYa and ustYb, and leads to the production of the first cyclization product N-desmethylustiloxin F. For the formation of N-desmethylustiloxin F, three oxidation steps are required, hydroxylation at the benzylic position, hydroxylation at either the aromatic ring of Tyr or beta-position of Ile, and oxidative cyclization. UstQ may catalyze the oxidation of a phenol moiety, whereas the ustYa and ustYb are most likely responsible for the remaining two-step oxidations. N-desmethylustiloxin F is then methylated by ustM to yield ustiloxin F which in turn substrate of the cytochrome P450 monooxygenase ustC which catalyzes the formation of S-deoxyustiloxin H. The flavoprotein monooxygenases ustF1 and ustF2 then participate in the modification of the side chain of S-deoxyustiloxin H, leading to the synthesis of an oxime intermediate, via ustiloxin H. Finally, carboxylative dehydration performed by the cysteine desulfurase-like protein ustD yields ustiloxin B. The polypeptide is Oxidase ustYa (Aspergillus flavus (strain ATCC 200026 / FGSC A1120 / IAM 13836 / NRRL 3357 / JCM 12722 / SRRC 167)).